Consider the following 161-residue polypeptide: Nucleotide-binding protein XAC3671 (161 aa).

It belongs to the YajQ family.

Nucleotide-binding protein. This is Nucleotide-binding protein XAC3671 from Xanthomonas axonopodis pv. citri (strain 306).